We begin with the raw amino-acid sequence, 173 residues long: Calcium-binding protein 5 (173 aa).

EF-hand domains lie at 28–63, 82–99, 105–140, and 142–173; these read DEIE…MGYM, GRVD…KLLA, IGVQ…LLGE, and LTPR…MMSR. Ca(2+)-binding residues include Asp-41, Asp-43, Asp-45, and Asp-52. 10 residues coordinate Ca(2+): Asp-118, Asn-120, Asp-122, Glu-124, Glu-129, Asp-155, Asn-157, Asp-159, Thr-161, and Glu-166.

Interacts with CACNA1C (via C-terminal CDB motif) in a calcium-dependent manner. Interacts with STXBP1. Interacts with MYO6. In terms of tissue distribution, retina.

Its subcellular location is the cytoplasm. Its function is as follows. Inhibits calcium-dependent inactivation of L-type calcium channel and shifts voltage dependence of activation to more depolarized membrane potentials. Involved in the transmission of light signals. May positively regulate neurotransmitter vesicle endocytosis and exocytosis in a salt-dependent manner. May play a role in the extension and network organization of neurites. This chain is Calcium-binding protein 5 (CABP5), found in Homo sapiens (Human).